A 133-amino-acid chain; its full sequence is MLHVHILSWVLAIILFIATYLNYSKTQGASPYYKPLHMALRLFMLLTLISGFWELIEEFMAASNGEGGNHMLLTLKMLCGLAVIAFMEISIAKRKKQQTSHKFFWITIILIIITMAIGVILPWGPISKIFGIS.

Transmembrane regions (helical) follow at residues 1–21, 42–62, 71–91, and 103–123; these read MLHV…ATYL, LFML…FMAA, MLLT…EISI, and FFWI…ILPW.

The protein belongs to the UPF0344 family.

Its subcellular location is the cell membrane. The sequence is that of UPF0344 protein SE_0666 from Staphylococcus epidermidis (strain ATCC 12228 / FDA PCI 1200).